A 360-amino-acid polypeptide reads, in one-letter code: Ribosomal RNA large subunit methyltransferase M (360 aa).

S-adenosyl-L-methionine contacts are provided by residues Ser187, 220-223 (CPGG), Asp239, Asp259, and Asp276. The active-site Proton acceptor is Lys305.

It belongs to the class I-like SAM-binding methyltransferase superfamily. RNA methyltransferase RlmE family. RlmM subfamily. Monomer.

It localises to the cytoplasm. It catalyses the reaction cytidine(2498) in 23S rRNA + S-adenosyl-L-methionine = 2'-O-methylcytidine(2498) in 23S rRNA + S-adenosyl-L-homocysteine + H(+). Functionally, catalyzes the 2'-O-methylation at nucleotide C2498 in 23S rRNA. The chain is Ribosomal RNA large subunit methyltransferase M from Shewanella pealeana (strain ATCC 700345 / ANG-SQ1).